Reading from the N-terminus, the 393-residue chain is MTMLATEKNPMIVSMGPHHPSMHGVLRLIVTLDGENVTNCEPILGYLHRGMEKIAENRTIIQYLPYVTRWDYLATMFTEAITVNAPEKLANIQVPKRASYIRVIMPELSRIASHLLWLGPFMADIGAQTPFFYIFRERETIYDLFEAATGMRMMHNYFRIGGVAVDSPYGWVDKCSDFCNYSLPKVNEYERLITRNPIFLKRVEGVGTIGGEEAINWGLSGPMLRASGVQWDLRKVDHYECYDESDWQIQRQEEGDSLARYSVRIGETKESVKIVQQALKVIPGGPYENLEARRLNRGKNSEWNDFEYQFISRKPSPTFKLPKQEHYVRVEAPKGELGIFLMGDDSAFPWRWKIRPPGFINLQILPQLVEGVKLADIMTILGSIDITMGEVDR.

Belongs to the complex I 49 kDa subunit family. NDH is composed of at least 16 different subunits, 5 of which are encoded in the nucleus.

It is found in the plastid. It localises to the chloroplast thylakoid membrane. The enzyme catalyses a plastoquinone + NADH + (n+1) H(+)(in) = a plastoquinol + NAD(+) + n H(+)(out). It catalyses the reaction a plastoquinone + NADPH + (n+1) H(+)(in) = a plastoquinol + NADP(+) + n H(+)(out). NDH shuttles electrons from NAD(P)H:plastoquinone, via FMN and iron-sulfur (Fe-S) centers, to quinones in the photosynthetic chain and possibly in a chloroplast respiratory chain. The immediate electron acceptor for the enzyme in this species is believed to be plastoquinone. Couples the redox reaction to proton translocation, and thus conserves the redox energy in a proton gradient. In Huperzia lucidula (Shining clubmoss), this protein is NAD(P)H-quinone oxidoreductase subunit H, chloroplastic.